The sequence spans 281 residues: Pantothenate synthetase (281 aa).

30–37 (MGNLHLGH) contacts ATP. H37 (proton donor) is an active-site residue. Residue Q61 coordinates (R)-pantoate. Q61 contributes to the beta-alanine binding site. 149–152 (GRKD) provides a ligand contact to ATP. A (R)-pantoate-binding site is contributed by Q155. ATP-binding positions include I178 and 186–189 (MSSR).

It belongs to the pantothenate synthetase family. Homodimer.

Its subcellular location is the cytoplasm. It catalyses the reaction (R)-pantoate + beta-alanine + ATP = (R)-pantothenate + AMP + diphosphate + H(+). Its pathway is cofactor biosynthesis; (R)-pantothenate biosynthesis; (R)-pantothenate from (R)-pantoate and beta-alanine: step 1/1. Functionally, catalyzes the condensation of pantoate with beta-alanine in an ATP-dependent reaction via a pantoyl-adenylate intermediate. This is Pantothenate synthetase from Shewanella woodyi (strain ATCC 51908 / MS32).